A 108-amino-acid polypeptide reads, in one-letter code: Putative DNA-directed RNA polymerase subunit 1 inactive homolog (108 aa).

The polypeptide is Putative DNA-directed RNA polymerase subunit 1 inactive homolog (Acanthamoeba polyphaga (Amoeba)).